A 344-amino-acid chain; its full sequence is Probable magnesium transporter NIPA9 (344 aa).

Residues 1–46 lie on the Cytoplasmic side of the membrane; it reads MWESICLTLAATAGNNIGKVLQKKGTIILPPLSLKLKVLRAYAENK. Transmembrane regions (helical) follow at residues 47–67 and 68–88; these read PWAL…RALS and LAPV…LSVF. Over 89-98 the chain is Cytoplasmic; that stretch reads SHFYLKEVMN. A helical transmembrane segment spans residues 99 to 119; it reads VFDWIGITVAGIGTIGVGAGG. At 120–125 the chain is on the extracellular side; the sequence is EEQEAS. The helical transmembrane segment at 126 to 146 threads the bilayer; sequence LISVFQLLWLALVVAILFVLL. Residues 147 to 166 are Cytoplasmic-facing; that stretch reads NAWLHIFKRQRREQELGEYE. Residues 167-187 form a helical membrane-spanning segment; it reads VVEEIIYGLESGILFGMASVV. At 188–191 the chain is on the extracellular side; the sequence is SKMG. The helical transmembrane segment at 192 to 212 threads the bilayer; it reads FVFVEQGFSTMFIPMCISISI. Residues 213–231 lie on the Cytoplasmic side of the membrane; that stretch reads CCSGTGFFYQTRGLKHGRA. The helical transmembrane segment at 232-252 threads the bilayer; it reads IVVSTCAAVASIVTGVVAGMF. Residues 253–265 are Extracellular-facing; that stretch reads ALGEKLPTSPSGR. Residues 266 to 286 form a helical membrane-spanning segment; sequence LLLLLGWLLIMLGVVLLVTSS. Over 287-344 the chain is Cytoplasmic; it reads RLIRHLPRSFRRSRQTSLERGFNIRRTTSHTPKDTNPSAVIQAATLHHLLSSPSKDKD.

This sequence belongs to the NIPA (TC 2.A.7) family. Homodimer.

It is found in the cell membrane. The protein resides in the early endosome. Its function is as follows. Acts as a Mg(2+) transporter. Can also transport other divalent cations such as Fe(2+), Sr(2+), Ba(2+), Mn(2+) and Co(2+) but to a much less extent than Mg(2+). The polypeptide is Probable magnesium transporter NIPA9 (Arabidopsis thaliana (Mouse-ear cress)).